A 500-amino-acid polypeptide reads, in one-letter code: 4-aminobutyrate aminotransferase, mitochondrial (500 aa).

Residues 1-28 (MASVLLTRRLACSFRHNHRLLVPGWRHI) constitute a mitochondrion transit peptide. C163 is a binding site for [2Fe-2S] cluster. Residue 164 to 165 (GS) coordinates pyridoxal 5'-phosphate. Residue C166 coordinates [2Fe-2S] cluster. R220 lines the substrate pocket. The residue at position 231 (K231) is an N6-succinyllysine. An N6-acetyllysine; alternate modification is found at K252. Residue K252 is modified to N6-succinyllysine; alternate. N6-acetyllysine occurs at positions 279 and 318. At K357 the chain carries N6-(pyridoxal phosphate)lysine. Residue T381 coordinates pyridoxal 5'-phosphate. K413 bears the N6-acetyllysine; alternate mark. Position 413 is an N6-succinyllysine; alternate (K413). 2 positions are modified to N6-acetyllysine: K452 and K470.

The protein belongs to the class-III pyridoxal-phosphate-dependent aminotransferase family. Homodimer; disulfide-linked. Pyridoxal 5'-phosphate is required as a cofactor. The cofactor is [2Fe-2S] cluster.

It localises to the mitochondrion matrix. It catalyses the reaction 4-aminobutanoate + 2-oxoglutarate = succinate semialdehyde + L-glutamate. It carries out the reaction (S)-3-amino-2-methylpropanoate + 2-oxoglutarate = 2-methyl-3-oxopropanoate + L-glutamate. Functionally, catalyzes the conversion of gamma-aminobutyrate and L-beta-aminoisobutyrate to succinate semialdehyde and methylmalonate semialdehyde, respectively. Can also convert delta-aminovalerate and beta-alanine. This chain is 4-aminobutyrate aminotransferase, mitochondrial (ABAT), found in Sus scrofa (Pig).